We begin with the raw amino-acid sequence, 346 residues long: Transposase for insertion sequence element IS1533 (346 aa).

Belongs to the transposase IS1111A/IS1328/IS1533 family.

In terms of biological role, required for the transposition of the insertion element. This Leptospira borgpetersenii protein is Transposase for insertion sequence element IS1533 (tnhA).